Reading from the N-terminus, the 233-residue chain is Sugar fermentation stimulation protein homolog (233 aa).

It belongs to the SfsA family.

This Teredinibacter turnerae (strain ATCC 39867 / T7901) protein is Sugar fermentation stimulation protein homolog.